The chain runs to 75 residues: Chaplin-D (75 aa).

The first 23 residues, 1 to 23 (MKKSAAVVAGAIMALGMAAPAFA), serve as a signal peptide directing secretion. Residues 34–74 (SPGVLSGNVIQVPVHVPVNVCGNSINVVGLLNPAFGNKCEN) form the Chaplin domain. An intrachain disulfide couples cysteine 54 to cysteine 72.

This sequence belongs to the chaplin family. Short chaplin subfamily.

Its subcellular location is the cell surface. It localises to the secreted. The protein localises to the cell wall. It is found in the fimbrium. In terms of biological role, one of 8 partially redundant surface-active proteins required for efficient formation of aerial mycelium; the short chaplins assemble into a hydrophobic, amyloidal fibrillar surface layer that envelopes and protects aerial hyphae and spores, presumably anchored to the long chaplins. Chaplins have an overlapping function with the surface-active SapB peptide; chaplins are essential on minimal medium while on rich medium both chaplins and SapB are required for efficient aerial hyphae formation. Chaplins are also involved in cell attachment to a hydrophobic surface. Forms amyloid fibrils in vitro probably composed of stacked beta-sheets, at low extracellular concentrations individually restores the ability to form aerial hyphae to a chaplin-deficient strain. A small chaplin extract (ChpD, ChpE, ChpF, ChpG and ChpH) self-assembles into 2 different amyloids; small fibrils at the air-water interface form an amphipathic membrane that resembles spore-surface structures involved in aerial hyphae formation, and hydrophilic fibrils in solution that resemble the fibers that attach cells to a hydrophobic surface. At the air-water interface the hydrophilic surface is in contact with water (probably equivalent to the peptidoglycan layer), while the hydrophobic face is exposed to the air, making the surface of the aerial hyphae hydrophobic. A minimal chaplin strain capable of forming aerial mycelium/hyphae on minimal medium contains ChpC, ChpE and ChpH. The strain also has restored rodlet formation on the hyphae surface. A second minimal chaplin strain with ChpA, ChpD and ChpE makes slightly less robust hyphae. A small chaplin extract applied to a chaplin-deficient strain restores aerial hyphae formation. The small chaplin extract forms an amyloid-like structure similar to that seen on the surface of cells without rodlets (rdlA-rdlB deletions), and is highly surface active, reducing surface tension from 72 to 26 mJ/m(2), which probably allows escape of hyphae from an aqueous environment into air. This Streptomyces coelicolor (strain ATCC BAA-471 / A3(2) / M145) protein is Chaplin-D.